The chain runs to 130 residues: MTRTSVLADALNAINNAEKTGKRQVLIRPSSKVIIKFLTVMQKHGYIGEFEYIDDHRSGKIVVQLNGRLNKCGVIQPRFNVKINDIERWTDNLLPARQFGYVILTTSAGIMDHEEARRKHVSGKILGFVY.

The protein belongs to the universal ribosomal protein uS8 family. As to quaternary structure, component of the small ribosomal subunit (SSU). Mature ribosomes consist of a small (40S) and a large (60S) subunit. The 40S subunit contains about 32 different proteins and 1 molecule of RNA (18S). The 60S subunit contains 45 different proteins and 3 molecules of RNA (25S, 5.8S and 5S).

It localises to the cytoplasm. Component of the ribosome, a large ribonucleoprotein complex responsible for the synthesis of proteins in the cell. The small ribosomal subunit (SSU) binds messenger RNAs (mRNAs) and translates the encoded message by selecting cognate aminoacyl-transfer RNA (tRNA) molecules. The large subunit (LSU) contains the ribosomal catalytic site termed the peptidyl transferase center (PTC), which catalyzes the formation of peptide bonds, thereby polymerizing the amino acids delivered by tRNAs into a polypeptide chain. The nascent polypeptides leave the ribosome through a tunnel in the LSU and interact with protein factors that function in enzymatic processing, targeting, and the membrane insertion of nascent chains at the exit of the ribosomal tunnel. This Candida albicans (strain SC5314 / ATCC MYA-2876) (Yeast) protein is Small ribosomal subunit protein uS8A (RPS22A).